Here is a 502-residue protein sequence, read N- to C-terminus: Glucose-6-phosphate isomerase (502 aa).

Glu331 (proton donor) is an active-site residue. Active-site residues include His362 and Lys471.

This sequence belongs to the GPI family.

It is found in the cytoplasm. The catalysed reaction is alpha-D-glucose 6-phosphate = beta-D-fructose 6-phosphate. It participates in carbohydrate biosynthesis; gluconeogenesis. Its pathway is carbohydrate degradation; glycolysis; D-glyceraldehyde 3-phosphate and glycerone phosphate from D-glucose: step 2/4. Its function is as follows. Catalyzes the reversible isomerization of glucose-6-phosphate to fructose-6-phosphate. The sequence is that of Glucose-6-phosphate isomerase from Xylella fastidiosa (strain M12).